Reading from the N-terminus, the 506-residue chain is RNA-splicing ligase RtcB homolog 1 (506 aa).

Residues Asp120, Cys123, His228, His260, and His354 each contribute to the Mn(2+) site. Residue 227-231 participates in GMP binding; sequence NHYAE. Residues 354–355, 403–406, Ser410, 429–432, and Lys505 each bind GMP; these read HN, GGSM, and HGAG. Residue His429 is the GMP-histidine intermediate of the active site.

It belongs to the RtcB family. Catalytic component of the tRNA-splicing ligase complex. Requires Mn(2+) as cofactor.

The enzyme catalyses a 3'-end 3'-phospho-ribonucleotide-RNA + a 5'-end dephospho-ribonucleoside-RNA + GTP = a ribonucleotidyl-ribonucleotide-RNA + GMP + diphosphate. It catalyses the reaction a 3'-end 2',3'-cyclophospho-ribonucleotide-RNA + a 5'-end dephospho-ribonucleoside-RNA + GTP + H2O = a ribonucleotidyl-ribonucleotide-RNA + GMP + diphosphate + H(+). Its function is as follows. Catalytic subunit of the tRNA-splicing ligase complex that acts by directly joining spliced tRNA halves to mature-sized tRNAs by incorporating the precursor-derived splice junction phosphate into the mature tRNA as a canonical 3',5'-phosphodiester. May act as an RNA ligase with broad substrate specificity, and may function toward other RNAs. The chain is RNA-splicing ligase RtcB homolog 1 from Culex quinquefasciatus (Southern house mosquito).